The sequence spans 901 residues: Protein translocase subunit SecA (901 aa).

ATP contacts are provided by residues Gln87, 105–109 (GEGKT), and Asp512. The interval 855-891 (QQLSHQDDETAAAAALAEQTGERKVGRNDPCPCGSGK) is disordered. Residues Cys885, Cys887, Cys896, and His897 each contribute to the Zn(2+) site.

The protein belongs to the SecA family. Monomer and homodimer. Part of the essential Sec protein translocation apparatus which comprises SecA, SecYEG and auxiliary proteins SecDF-YajC and YidC. It depends on Zn(2+) as a cofactor.

It localises to the cell inner membrane. The protein resides in the cytoplasm. It carries out the reaction ATP + H2O + cellular proteinSide 1 = ADP + phosphate + cellular proteinSide 2.. Functionally, part of the Sec protein translocase complex. Interacts with the SecYEG preprotein conducting channel. Has a central role in coupling the hydrolysis of ATP to the transfer of proteins into and across the cell membrane, serving both as a receptor for the preprotein-SecB complex and as an ATP-driven molecular motor driving the stepwise translocation of polypeptide chains across the membrane. The chain is Protein translocase subunit SecA from Cronobacter sakazakii (strain ATCC BAA-894) (Enterobacter sakazakii).